The following is a 125-amino-acid chain: Ino eighty subunit 5 (125 aa).

Phosphothreonine is present on Thr124.

Component of the chromatin-remodeling INO80 complex, at least composed of ARP4, ARP5, ARP8, RVB1, RVB2, TAF14, NHP10, IES1, IES3, IES4, IES6, ACT1, IES2, IES5 and INO80.

It localises to the nucleus. This is Ino eighty subunit 5 (IES5) from Saccharomyces cerevisiae (strain ATCC 204508 / S288c) (Baker's yeast).